Consider the following 540-residue polypeptide: Glucose-6-phosphate isomerase (540 aa).

E346 functions as the Proton donor in the catalytic mechanism. Residues H377 and K505 contribute to the active site.

The protein belongs to the GPI family.

Its subcellular location is the cytoplasm. The catalysed reaction is alpha-D-glucose 6-phosphate = beta-D-fructose 6-phosphate. Its pathway is carbohydrate biosynthesis; gluconeogenesis. The protein operates within carbohydrate degradation; glycolysis; D-glyceraldehyde 3-phosphate and glycerone phosphate from D-glucose: step 2/4. Catalyzes the reversible isomerization of glucose-6-phosphate to fructose-6-phosphate. The polypeptide is Glucose-6-phosphate isomerase (Francisella philomiragia subsp. philomiragia (strain ATCC 25017 / CCUG 19701 / FSC 153 / O#319-036)).